The sequence spans 343 residues: Cytoplasmic tRNA 2-thiolation protein 1 (343 aa).

This sequence belongs to the TtcA family. CTU1/NCS6/ATPBD3 subfamily.

The protein localises to the cytoplasm. It participates in tRNA modification; 5-methoxycarbonylmethyl-2-thiouridine-tRNA biosynthesis. In terms of biological role, plays a central role in 2-thiolation of mcm(5)S(2)U at tRNA wobble positions of tRNA(Lys), tRNA(Glu) and tRNA(Gln). Directly binds tRNAs and probably acts by catalyzing adenylation of tRNAs, an intermediate required for 2-thiolation. It is unclear whether it acts as a sulfurtransferase that transfers sulfur from thiocarboxylated URM1 onto the uridine of tRNAs at wobble position. This is Cytoplasmic tRNA 2-thiolation protein 1 from Drosophila yakuba (Fruit fly).